The sequence spans 193 residues: Serine recombinase gin (193 aa).

Residues 1–134 (MLIGYVRVST…AGLAAARNKG (134 aa)) enclose the Resolvase/invertase-type recombinase catalytic domain. The active-site O-(5'-phospho-DNA)-serine intermediate is the Ser-9. Residues 138–183 (GRPPKLTKAEWEQAGRLLAQGIPRKQVALIYDVALSTLYKKHPAKR) constitute a DNA-binding region (H-T-H motif).

The protein belongs to the site-specific recombinase resolvase family. In terms of assembly, homodimer. During inversion, two dimers associate to form a homotetramer.

It localises to the host cytoplasm. Performs inversion of a viral 3 kp segment (G-segment) that encodes two alternate pairs of tail fiber proteins thereby modifying the host specificity of the virus. Binds as a dimer to the viral gix sites which are 34-bp palindromic sequences that flank the invertible G-segment. Catalyzes site-specific recombination in the presence of the host factor Fis. Gin dimers bound to each of the gix sites and host factor Fis bound to the enhancer come together to form the synaptic complex. Each Gin monomer introduces a nick and becomes covalently attached to the 5'-phosphate of the DNA, resulting in double-stranded staggered breaks at both recombination sites. A 180 degrees rotation of one of the two Gin dimers followed by religation of the DNA leads to the inversion of the G-segment (G+ or G- orientation). The protein is Serine recombinase gin (gin) of Escherichia phage Mu (Bacteriophage Mu).